The sequence spans 1050 residues: Beta-galactosidase (1050 aa).

Residues Asn100 and Asp199 each contribute to the substrate site. Residue Asp199 coordinates Na(+). The Mg(2+) site is built by Glu422, His424, and Glu467. Substrate is bound by residues Glu467 and 543-546 (EYAH). The Proton donor role is filled by Glu467. Glu543 serves as the catalytic Nucleophile. Asn603 contacts Mg(2+). Na(+)-binding residues include Phe607 and Asn610. Positions 610 and 1025 each coordinate substrate.

Belongs to the glycosyl hydrolase 2 family. Homotetramer. It depends on Mg(2+) as a cofactor. Na(+) serves as cofactor.

The catalysed reaction is Hydrolysis of terminal non-reducing beta-D-galactose residues in beta-D-galactosides.. This Yersinia pestis bv. Antiqua (strain Angola) protein is Beta-galactosidase.